The primary structure comprises 392 residues: MTSLQILADANIPRVEDAFGQFGTVRRMPGREMTTSDVAAADVLLVRSVTPVGPALLDGTPLRFVGSATIGTDHVDRDYLRAQGIPFAHAPGSNADSVADYVVAALLGLARRRGGALEERTVGIVGCGNIGGRLARRLSALGMEVLRNDPPRARAADADGTGHGFVPLDTVLGAADVVTLHVPLKASGPDPTHHLVDAAFLDRLGDGAWLLNTSRGAVVDGDALLAARRRGDVAAAVLDVWENEPSPDPALIEAVDLATPHIAGYAYDGKVRGTEMLYEALCDALGGEARWAGTDAIRPASADALRGRAPDPRLSATEWRFELARQAYDPAVDDASLRDLVKLGPDARGEAFAHLRAGYRRRREMQQHTVPGTAVPAEHEQAVTEGLKMKLD.

The substrate site is built by Ser-48 and Thr-69. Asp-149 provides a ligand contact to NAD(+). Arg-215 is an active-site residue. Asp-239 serves as a coordination point for NAD(+). Residue Glu-244 is part of the active site. The active-site Proton donor is the His-261. Residue Gly-264 coordinates NAD(+). Tyr-265 is a substrate binding site.

It belongs to the D-isomer specific 2-hydroxyacid dehydrogenase family. PdxB subfamily. As to quaternary structure, homodimer.

Its subcellular location is the cytoplasm. The catalysed reaction is 4-phospho-D-erythronate + NAD(+) = (R)-3-hydroxy-2-oxo-4-phosphooxybutanoate + NADH + H(+). Its pathway is cofactor biosynthesis; pyridoxine 5'-phosphate biosynthesis; pyridoxine 5'-phosphate from D-erythrose 4-phosphate: step 2/5. Catalyzes the oxidation of erythronate-4-phosphate to 3-hydroxy-2-oxo-4-phosphonooxybutanoate. This Salinibacter ruber (strain DSM 13855 / M31) protein is Erythronate-4-phosphate dehydrogenase.